A 421-amino-acid polypeptide reads, in one-letter code: MAGDFSNRAPWKRSACDRCRAQKLRCHRDSGHSTDACLRCLKSGIECVTSKARPTGRPPSRQVQPTVVVEQGDTSSSSHTTDSSPSAGGTDMSNMMNFEYDLSLDNILDSIGMQHSDFMVNDNILVDISPLSSSQSTGQHSVTQAQVQAQTVDPSTIQSTASYQFNSLPSTSSMDSALPIRSDHVELLLSRLHSKLSAQLYSIRSSPWDIKGTLNLSLAHQGIGQDFENCESHPLVQVSQACTELERLLSGLRVPASAEHTPSSFSYTPAVPPRLRTTQLLIALSCYIQIVSIYGIIFSKVFDYLLSTSKTSNGSYQSSPLTLYIGGLPIPPNETLSGNLLVHLIEHQLHQIEQLMGLPEHYRVSSRAKDTKDGELGLFGSQHSQSLLNAAIQLGEDRDGNHDDIRCVRALKVVMRQIKDF.

Residues 16–47 (CDRCRAQKLRCHRDSGHSTDACLRCLKSGIEC) constitute a DNA-binding region (zn(2)-C6 fungal-type). The interval 50 to 92 (SKARPTGRPPSRQVQPTVVVEQGDTSSSSHTTDSSPSAGGTDM) is disordered. The span at 74 to 86 (TSSSSHTTDSSPS) shows a compositional bias: low complexity.

Its subcellular location is the nucleus. Functionally, transcription factor that regulates the expression of the gene cluster that mediates the biosynthesis of fusaric acid, a mycotoxin with low to moderate toxicity to animals and humans, but with high phytotoxic properties. In Gibberella moniliformis (strain M3125 / FGSC 7600) (Maize ear and stalk rot fungus), this protein is Fusaric acid cluster transcription factor FUB10.